Reading from the N-terminus, the 351-residue chain is Ribosomal RNA large subunit methyltransferase M (351 aa).

Residues S186, 219–222 (APGG), D238, D258, and D274 each bind S-adenosyl-L-methionine. K303 functions as the Proton acceptor in the catalytic mechanism.

It belongs to the class I-like SAM-binding methyltransferase superfamily. RNA methyltransferase RlmE family. RlmM subfamily. Monomer.

It localises to the cytoplasm. It catalyses the reaction cytidine(2498) in 23S rRNA + S-adenosyl-L-methionine = 2'-O-methylcytidine(2498) in 23S rRNA + S-adenosyl-L-homocysteine + H(+). Catalyzes the 2'-O-methylation at nucleotide C2498 in 23S rRNA. This chain is Ribosomal RNA large subunit methyltransferase M, found in Xylella fastidiosa (strain M12).